The following is a 289-amino-acid chain: MKWLIFGNKGWIGSMVSKILEQQGEQVVGAQSRADDESAVEREISEIKPDRVMSFIGRTHGPGYSTIDYLEQSGKLVENVKDNLYGPLCLAFICQKYNIHLTYLGTGCIFEGQNNFSADEKGFTENDKPNFFGSSYSVVKGFTDRLMHFFDNDVLNLRIRMPITIEQNPRSFITKILSYSRICSIPNSMTILDQMIPVMIDMARNKTTGTFNFTNPGLVSHNEILSLIRDIHKPNLTWENMSREQQLAILKADRSNNLLNTDKLQSLYPDVPDILTGIREVVSKMKFQQ.

This is an uncharacterized protein from Acanthamoeba polyphaga mimivirus (APMV).